Reading from the N-terminus, the 436-residue chain is Trigger factor (436 aa).

The PPIase FKBP-type domain occupies 163-248 (GDRVTVDFEG…VKKIEAANLP (86 aa)).

This sequence belongs to the FKBP-type PPIase family. Tig subfamily.

The protein resides in the cytoplasm. The catalysed reaction is [protein]-peptidylproline (omega=180) = [protein]-peptidylproline (omega=0). Its function is as follows. Involved in protein export. Acts as a chaperone by maintaining the newly synthesized protein in an open conformation. Functions as a peptidyl-prolyl cis-trans isomerase. The polypeptide is Trigger factor (Delftia acidovorans (strain DSM 14801 / SPH-1)).